Here is a 432-residue protein sequence, read N- to C-terminus: PC-esterase domain-containing protein 1B (432 aa).

Disordered stretches follow at residues 273 to 312 (WESS…SPGL) and 407 to 432 (GPYM…SRPQ). A compositionally biased stretch (polar residues) spans 285 to 294 (QDNIGPQFAQ). Over residues 296-312 (PPYPFPRPPPLLPSPGL) the composition is skewed to pro residues.

This sequence belongs to the PC-esterase family.

The chain is PC-esterase domain-containing protein 1B (Pced1b) from Rattus norvegicus (Rat).